The primary structure comprises 324 residues: MAELEFEKPVVELRNKIRELKEYTKHSQMDFSEEIRILEDKLENLEEEIYGNMKVWDRVQIARHAERPTTLDYIEHLFTDFFECHGDRFFGDDAAIVGGIAKYNGMPVTVIGHQRGKDTKENIRRNFGMPHPEGYRKALRLMKQAEKFNRPIICFIDTKGAYPGKAAEERGQSEAIARNLFEMAGLTVPVICIVIGEGGSGGALGLGVGDYIYMLENSTYSVISPEGAATILWKDATKARDAAEALKITAADLKELGVIDEIIPESRGGAHRNILKQSENINVVLQKTFEQLSGISKDELIEKRYEKYMKIGQVSFSNASIWVK.

Residues 37-291 enclose the CoA carboxyltransferase C-terminal domain; that stretch reads ILEDKLENLE…NVVLQKTFEQ (255 aa).

This sequence belongs to the AccA family. As to quaternary structure, acetyl-CoA carboxylase is a heterohexamer composed of biotin carboxyl carrier protein (AccB), biotin carboxylase (AccC) and two subunits each of ACCase subunit alpha (AccA) and ACCase subunit beta (AccD).

Its subcellular location is the cytoplasm. It catalyses the reaction N(6)-carboxybiotinyl-L-lysyl-[protein] + acetyl-CoA = N(6)-biotinyl-L-lysyl-[protein] + malonyl-CoA. It participates in lipid metabolism; malonyl-CoA biosynthesis; malonyl-CoA from acetyl-CoA: step 1/1. Component of the acetyl coenzyme A carboxylase (ACC) complex. First, biotin carboxylase catalyzes the carboxylation of biotin on its carrier protein (BCCP) and then the CO(2) group is transferred by the carboxyltransferase to acetyl-CoA to form malonyl-CoA. In Bacillus cytotoxicus (strain DSM 22905 / CIP 110041 / 391-98 / NVH 391-98), this protein is Acetyl-coenzyme A carboxylase carboxyl transferase subunit alpha.